The primary structure comprises 308 residues: Oxygen-dependent coproporphyrinogen-III oxidase (308 aa).

S100 is a substrate binding site. H104 and H114 together coordinate a divalent metal cation. The active-site Proton donor is the H114. Substrate is bound at residue 116–118 (NFR). A divalent metal cation-binding residues include H153 and H183. An important for dimerization region spans residues 248-283 (YVEFNLVFDRGTIFGLQSGGRTESILSSMPPMATWK). Residue 266-268 (GGR) coordinates substrate.

This sequence belongs to the aerobic coproporphyrinogen-III oxidase family. Homodimer. The cofactor is a divalent metal cation.

The protein localises to the cytoplasm. The enzyme catalyses coproporphyrinogen III + O2 + 2 H(+) = protoporphyrinogen IX + 2 CO2 + 2 H2O. The protein operates within porphyrin-containing compound metabolism; protoporphyrin-IX biosynthesis; protoporphyrinogen-IX from coproporphyrinogen-III (O2 route): step 1/1. Its function is as follows. Involved in the heme biosynthesis. Catalyzes the aerobic oxidative decarboxylation of propionate groups of rings A and B of coproporphyrinogen-III to yield the vinyl groups in protoporphyrinogen-IX. The protein is Oxygen-dependent coproporphyrinogen-III oxidase of Francisella tularensis subsp. holarctica (strain OSU18).